The chain runs to 257 residues: 5'-nucleotidase SurE (257 aa).

Positions 9, 10, 40, and 92 each coordinate a divalent metal cation.

Belongs to the SurE nucleotidase family. A divalent metal cation is required as a cofactor.

It is found in the cytoplasm. The catalysed reaction is a ribonucleoside 5'-phosphate + H2O = a ribonucleoside + phosphate. Functionally, nucleotidase that shows phosphatase activity on nucleoside 5'-monophosphates. The protein is 5'-nucleotidase SurE of Alkalilimnicola ehrlichii (strain ATCC BAA-1101 / DSM 17681 / MLHE-1).